The following is a 181-amino-acid chain: Sodium/potassium-transporting ATPase subunit beta-1-interacting protein 3 (181 aa).

The next 4 helical transmembrane spans lie at 5-22, 35-55, 62-82, and 151-171; these read TGRCTLIFICTLQMLVAL, APILGNFLHIIVVILGLFGTI, IVAYTIWTAFWVAWNVFIICF, and AVQILLSLIGFVYACYVISVI.

It belongs to the NKAIN family. As to quaternary structure, interacts with atp1b1 C-terminus.

The protein resides in the cell membrane. This is Sodium/potassium-transporting ATPase subunit beta-1-interacting protein 3 (nkain3) from Xenopus tropicalis (Western clawed frog).